Reading from the N-terminus, the 239-residue chain is Fatty acid metabolism regulator protein (239 aa).

One can recognise an HTH gntR-type domain in the interval 6–74; it reads QSPAGFAEEY…HGKPTKVNNF (69 aa). The segment at residues 34 to 53 is a DNA-binding region (H-T-H motif); that stretch reads ERELSELIGVTRTTLREVLQ.

In terms of assembly, homodimer.

The protein resides in the cytoplasm. In terms of biological role, multifunctional regulator of fatty acid metabolism. In Shigella flexneri, this protein is Fatty acid metabolism regulator protein.